The following is a 425-amino-acid chain: Histone-binding protein RBBP4-A (425 aa).

Residue Ala2 is modified to N-acetylalanine. 7 WD repeats span residues 32–125 (YDLV…THDG), 126–175 (EVNR…RLRG), 176–223 (HQKE…KTIF), 225–270 (GHTA…HSVD), 271–314 (AHTA…HSFE), 315–371 (SHKD…FIHG), and 372–404 (GHTA…VWQM).

The protein belongs to the WD repeat RBAP46/RBAP48/MSI1 family. Binds directly to histone H4, probably via helix 1 of the histone fold, a region that is not accessible when histone H4 is in chromatin. Probably forms a large corepressor complex that contains ncor1, sin3a, hdac1-A and/or hdac1-B, hdac2, rbbp4-A and/or rbbp4-B and possibly rbbp7.

Its subcellular location is the nucleus. It localises to the chromosome. The protein localises to the telomere. Functionally, core histone-binding subunit that may target chromatin assembly factors, chromatin remodeling factors and histone deacetylases to their histone substrates in a manner that is regulated by nucleosomal DNA. Component of several complexes which regulate chromatin metabolism. This chain is Histone-binding protein RBBP4-A (rbbp4-a), found in Xenopus laevis (African clawed frog).